The sequence spans 194 residues: Lymphocyte antigen 6 complex locus protein G5b (194 aa).

An N-terminal signal peptide occupies residues 1-18; that stretch reads MRACVLVHVLTMVGFALG. Residues 26 to 118 enclose the UPAR/Ly6 domain; the sequence is RTCHLCFLED…SAQHQSTLPG (93 aa). 5 disulfide bridges follow: Cys28–Cys55, Cys31–Cys40, Cys47–Cys73, Cys81–Cys98, and Cys99–Cys104. N-linked (GlcNAc...) asparagine glycosylation is present at Asn182.

Post-translationally, N-glycosylated.

Its subcellular location is the secreted. The chain is Lymphocyte antigen 6 complex locus protein G5b (Ly6g5b) from Rattus norvegicus (Rat).